We begin with the raw amino-acid sequence, 510 residues long: ATP synthase subunit alpha (510 aa).

Residue 169-176 (GDRQTGKT) participates in ATP binding.

This sequence belongs to the ATPase alpha/beta chains family. As to quaternary structure, F-type ATPases have 2 components, CF(1) - the catalytic core - and CF(0) - the membrane proton channel. CF(1) has five subunits: alpha(3), beta(3), gamma(1), delta(1), epsilon(1). CF(0) has three main subunits: a(1), b(2) and c(9-12). The alpha and beta chains form an alternating ring which encloses part of the gamma chain. CF(1) is attached to CF(0) by a central stalk formed by the gamma and epsilon chains, while a peripheral stalk is formed by the delta and b chains.

It localises to the cell inner membrane. The enzyme catalyses ATP + H2O + 4 H(+)(in) = ADP + phosphate + 5 H(+)(out). Its function is as follows. Produces ATP from ADP in the presence of a proton gradient across the membrane. The alpha chain is a regulatory subunit. The chain is ATP synthase subunit alpha from Rickettsia massiliae (strain Mtu5).